The following is a 147-amino-acid chain: Acidic phospholipase A2 S7-48J (147 aa).

An N-terminal signal peptide occupies residues 1–19 (MYPAHLLVLLAVCVSLLGA). Residues 20–27 (SDIPPQPL) constitute a propeptide that is removed on maturation. 7 disulfides stabilise this stretch: cysteine 38/cysteine 99, cysteine 54/cysteine 146, cysteine 56/cysteine 72, cysteine 71/cysteine 127, cysteine 78/cysteine 120, cysteine 88/cysteine 113, and cysteine 106/cysteine 118. Ca(2+) contacts are provided by tyrosine 55, glycine 57, and glycine 59. Histidine 75 is an active-site residue. Residue aspartate 76 participates in Ca(2+) binding. Aspartate 121 is a catalytic residue.

Belongs to the phospholipase A2 family. Group I subfamily. D49 sub-subfamily. Ca(2+) is required as a cofactor. As to expression, expressed by the venom gland.

It localises to the secreted. It catalyses the reaction a 1,2-diacyl-sn-glycero-3-phosphocholine + H2O = a 1-acyl-sn-glycero-3-phosphocholine + a fatty acid + H(+). Snake venom phospholipase A2 (PLA2) that inhibits collagen-induced platelet aggregation. PLA2 catalyzes the calcium-dependent hydrolysis of the 2-acyl groups in 3-sn-phosphoglycerides. This chain is Acidic phospholipase A2 S7-48J, found in Austrelaps superbus (Lowland copperhead snake).